The sequence spans 66 residues: Large ribosomal subunit protein bL33c (66 aa).

Belongs to the bacterial ribosomal protein bL33 family.

It is found in the plastid. It localises to the chloroplast. The sequence is that of Large ribosomal subunit protein bL33c from Carica papaya (Papaya).